Here is a 721-residue protein sequence, read N- to C-terminus: Cytosolic carboxypeptidase 2 (721 aa).

The segment at 43–71 (TASDMINSSSPSESSDSNLEEEQEESKPC) is disordered. A compositionally biased stretch (low complexity) spans 50–59 (SSSPSESSDS). One can recognise a Peptidase M14 domain in the interval 334–605 (YPYTYSKLQH…CFCDTLLDFC (272 aa)). Zn(2+) contacts are provided by His400, Glu403, and His496. The active-site Proton donor/acceptor is the Glu569. Residues 645–721 (DIESSTSGSN…TQHGDTEDQS (77 aa)) form a disordered region. Positions 647 to 660 (ESSTSGSNSTESDG) are enriched in low complexity. A compositionally biased stretch (basic residues) spans 672–688 (GKKKLLRSRKERNRLRQ). The span at 703 to 714 (YSCQTLNATTQH) shows a compositional bias: polar residues.

This sequence belongs to the peptidase M14 family. The cofactor is Zn(2+).

It localises to the cytoplasm. Its subcellular location is the cytosol. It is found in the cytoskeleton. The protein resides in the microtubule organizing center. The protein localises to the centrosome. It localises to the centriole. Its subcellular location is the cilium basal body. It catalyses the reaction (L-glutamyl)(n+1)-gamma-L-glutamyl-L-glutamyl-[protein] + H2O = (L-glutamyl)(n)-gamma-L-glutamyl-L-glutamyl-[protein] + L-glutamate. In terms of biological role, metallocarboxypeptidase that mediates deglutamylation of target proteins. Catalyzes the deglutamylation of polyglutamate side chains generated by post-translational polyglutamylation in proteins such as tubulins. Also removes gene-encoded polyglutamates from the carboxy-terminus of target proteins such as MYLK. Does not show detyrosinase or deglycylase activities from the carboxy-terminus of tubulin. Its function is as follows. Metallocarboxypeptidase that mediates deglutamylation of tubulin and non-tubulin target proteins. Catalyzes the removal of polyglutamate side chains present on the gamma-carboxyl group of glutamate residues within the C-terminal tail of tubulin protein. Specifically cleaves tubulin long-side-chains, while it is not able to remove the branching point glutamate. Also catalyzes the removal of polyglutamate residues from the carboxy-terminus of non-tubulin proteins. This is Cytosolic carboxypeptidase 2 (zte25) from Danio rerio (Zebrafish).